Here is a 196-residue protein sequence, read N- to C-terminus: UPF0056 membrane protein BU449 (196 aa).

6 consecutive transmembrane segments (helical) span residues threonine 8–leucine 28, isoleucine 45–leucine 65, threonine 71–serine 91, phenylalanine 105–leucine 125, methionine 134–serine 154, and methionine 174–phenylalanine 194.

This sequence belongs to the UPF0056 (MarC) family.

Its subcellular location is the cell membrane. The polypeptide is UPF0056 membrane protein BU449 (Buchnera aphidicola subsp. Acyrthosiphon pisum (strain APS) (Acyrthosiphon pisum symbiotic bacterium)).